The chain runs to 1298 residues: Activating molecule in BECN1-regulated autophagy protein 1 (1298 aa).

The interaction with DDB1 stretch occupies residues 1–22 (MKVVPEKNAVRILWGRERGARA). Lys-45 participates in a covalent cross-link: Glycyl lysine isopeptide (Lys-Gly) (interchain with G-Cter in ubiquitin). WD repeat units follow at residues 51–90 (DSPR…CVHS), 93–133 (GHRR…ESWF), and 135–175 (DSNN…AVVK). Residue Ser-52 is modified to Phosphoserine; by MTOR. Polar residues predominate over residues 254 to 266 (IQVGEQSTVQDSA). Residues 254 to 284 (IQVGEQSTVQDSATPSPPPPPPQPSTERPRT) are disordered. The span at 268–277 (PSPPPPPPQP) shows a compositional bias: pro residues. A PxP motif 1 motif is present at residues 275-281 (PQPSTER). Ser-328 is modified (phosphoserine). The disordered stretch occupies residues 343–413 (FVQTEPFHPP…SRYHREIAPG (71 aa)). Residues 354–385 (QASSTQQDQGLLNRPSAFSTVQSSTAGNTLRN) show a composition bias toward polar residues. Phosphoserine occurs at positions 394 and 443. 3 stretches are compositionally biased toward polar residues: residues 458–467 (SQASVYTSAT), 547–561 (HQPT…SNLS), and 590–601 (NYSSGEASSSWQ). Disordered regions lie at residues 458–494 (SQAS…NSGS), 538–561 (IESE…SNLS), 590–690 (NYSS…DSLR), and 747–796 (RYQQ…NARM). 2 stretches are compositionally biased toward low complexity: residues 602 to 614 (VPSS…SSGS) and 628 to 639 (SSSRLELSSSAS). Residues Ser-635 and Ser-639 each carry the phosphoserine modification. Over residues 661–674 (YTQSSRSGTVSQEA) the composition is skewed to polar residues. Asymmetric dimethylarginine is present on Arg-747. The span at 772 to 781 (TDLEFEDFED) shows a compositional bias: acidic residues. Phosphoserine; by IKKA is present on Ser-1043. Residues 1043–1052 (SGVEYYWDQL) carry the LIR motif. Polar residues predominate over residues 1060 to 1075 (HSNSRSSERPGTSRAT). Positions 1060-1079 (HSNSRSSERPGTSRATWRTD) are disordered. Short sequence motifs (TQT motif) lie at residues 1104 to 1106 (TQT) and 1116 to 1118 (TQT). 3 disordered regions span residues 1112–1143 (QNAE…YGAS), 1190–1214 (RSSQ…SRGL), and 1227–1298 (SPRT…PRNR). The span at 1191 to 1212 (SSQTGTEPGAAHTSSPQPSTSR) shows a compositional bias: polar residues. At Ser-1205 the chain carries Phosphoserine. Residues 1206-1212 (PQPSTSR) carry the PxP motif 2 motif.

The protein belongs to the WD repeat AMBRA1 family. Component of the DCX(AMBRA1) E3 ubiquitin ligase complex, also named CRL4(AMBRA1), at least composed of CUL4 (CUL4A or CUL4B), DDB1, AMBRA1 and RBX1. Interacts with BECN1. Probably forms a complex with BECN1 and PIK3C3. Interacts with BECN2. Interacts with BCL2; leading to prevent interaction with BCN1 and autophagy, interaction is disrupted upon autophagy induction. Interacts with ULK1. Interacts (via PxP motifs) with PPP2CA; enhancing interaction between PPP2CA and MYC or FOXO3. Forms a complex with PPP2CA and BECN1; AMBRA1 and BECN1 components of the complex regulate MYC stability via different pathways. Interacts (TQT motifs) with DYNLL1 and DYNLL2; tethering AMBRA1 and the BECN1-PIK3C3 complex in absence of autophagy. Interacts with TRAF6; interaction is required to mediate 'Lys-63'-linked ubiquitination of ULK1. Interacts with TRIM32; promoting activation of ULK1 by TRIM32 via unanchored 'Lys-63'-linked polyubiquitin chains. Interacts with PRKN. Interacts (via LIR motif) with LC3 (MAP1LC3A, MAP1LC3B or MAP1LC3C). Interacts with HUWE1. Interacts with PTK2/FAK. Interacts with SRC; required for SRC trafficking to autophagosomes. Phosphorylation at Ser-52 by MTOR inhibits its ability to regulate autophagy and mediate ubiquitination of ULK1. Phosphorylation by ULK1 in response to autophagy induction abolishes interaction with DYNLL1 and DYNLL2, releasing AMBRA1 from the cytoskeletal docking site to induce autophagosome nucleation. Phosphorylation by MTOR inhibits interaction with PPP2CA and subsequent dephosphorylation of MYC. Phosphorylation at Ser-1043 by CHUK/IKKA promotes its interaction with ATG8 family proteins GABARAP and MAP1LC3B and its mitophagic activity. In terms of processing, ubiquitinated by RNF2 via 'Lys-48'-linkage in unstressed cells, leading to its degradation by the proteasome. Induction of autophagy promotes stabilization via interaction with CUL4 (CUL4A or CUL4B) and DDB1. Upon prolonged starvation, ubiquitinated and degraded, terminating the autophagy response. Post-translationally, undergoes proteolytic processing by caspase-6 (CASP6), caspase-7 (CASP7) and caspase-8 (CASP8) during apoptosis, resulting in the dismantling of the autophagic machinery and the accomplishment of the programmed cell death program. Also cleaved by calpains during apoptosis, which mediate a complete proteolytic degradation.

Its subcellular location is the endoplasmic reticulum. The protein localises to the cytoplasm. It is found in the cytoskeleton. The protein resides in the cytoplasmic vesicle. It localises to the autophagosome. Its subcellular location is the mitochondrion. The protein localises to the cytosol. It is found in the nucleus. The protein resides in the cell junction. It localises to the focal adhesion. The protein operates within protein modification; protein ubiquitination. In terms of biological role, substrate-recognition component of a DCX (DDB1-CUL4-X-box) E3 ubiquitin-protein ligase complex involved in cell cycle control and autophagy. The DCX(AMBRA1) complex specifically mediates the polyubiquitination of target proteins such as BECN1, CCND1, CCND2, CCND3, ELOC and ULK1. Acts as an upstream master regulator of the transition from G1 to S cell phase: AMBRA1 specifically recognizes and binds phosphorylated cyclin-D (CCND1, CCND2 and CCND3), leading to cyclin-D ubiquitination by the DCX(AMBRA1) complex and subsequent degradation. By controlling the transition from G1 to S phase and cyclin-D degradation, AMBRA1 acts as a tumor suppressor that promotes genomic integrity during DNA replication and counteracts developmental abnormalities and tumor growth. AMBRA1 also regulates the cell cycle by promoting MYC dephosphorylation and degradation independently of the DCX(AMBRA1) complex: acts via interaction with the catalytic subunit of protein phosphatase 2A (PPP2CA), which enhances interaction between PPP2CA and MYC, leading to MYC dephosphorylation and degradation. Acts as a regulator of Cul5-RING (CRL5) E3 ubiquitin-protein ligase complexes by mediating ubiquitination and degradation of Elongin-C (ELOC) component of CRL5 complexes. Acts as a key regulator of autophagy by modulating the BECN1-PIK3C3 complex: controls protein turnover during neuronal development, and regulates normal cell survival and proliferation. In normal conditions, AMBRA1 is tethered to the cytoskeleton via interaction with dyneins DYNLL1 and DYNLL2. Upon autophagy induction, AMBRA1 is released from the cytoskeletal docking site to induce autophagosome nucleation by mediating ubiquitination of proteins involved in autophagy. The DCX(AMBRA1) complex mediates 'Lys-63'-linked ubiquitination of BECN1, increasing the association between BECN1 and PIK3C3 to promote PIK3C3 activity. In collaboration with TRAF6, AMBRA1 mediates 'Lys-63'-linked ubiquitination of ULK1 following autophagy induction, promoting ULK1 stability and kinase activity. Also activates ULK1 via interaction with TRIM32: TRIM32 stimulates ULK1 through unanchored 'Lys-63'-linked polyubiquitin chains. Also acts as an activator of mitophagy via interaction with PRKN and LC3 proteins (MAP1LC3A, MAP1LC3B or MAP1LC3C); possibly by bringing damaged mitochondria onto autophagosomes. Also activates mitophagy by acting as a cofactor for HUWE1; acts by promoting HUWE1-mediated ubiquitination of MFN2. AMBRA1 is also involved in regulatory T-cells (Treg) differentiation by promoting FOXO3 dephosphorylation independently of the DCX(AMBRA1) complex: acts via interaction with PPP2CA, which enhances interaction between PPP2CA and FOXO3, leading to FOXO3 dephosphorylation and stabilization. May act as a regulator of intracellular trafficking, regulating the localization of active PTK2/FAK and SRC. Also involved in transcription regulation by acting as a scaffold for protein complexes at chromatin. This chain is Activating molecule in BECN1-regulated autophagy protein 1, found in Homo sapiens (Human).